Here is a 586-residue protein sequence, read N- to C-terminus: Aspartate--tRNA(Asp/Asn) ligase (586 aa).

E175 is an L-aspartate binding site. Positions 199–202 (QIFK) are aspartate. Residue R221 participates in L-aspartate binding. ATP contacts are provided by residues 221–223 (RDE) and Q230. H448 is an L-aspartate binding site. E482 contacts ATP. R489 is a binding site for L-aspartate. An ATP-binding site is contributed by 534–537 (GVDR).

The protein belongs to the class-II aminoacyl-tRNA synthetase family. Type 1 subfamily. In terms of assembly, homodimer.

It localises to the cytoplasm. It carries out the reaction tRNA(Asx) + L-aspartate + ATP = L-aspartyl-tRNA(Asx) + AMP + diphosphate. In terms of biological role, aspartyl-tRNA synthetase with relaxed tRNA specificity since it is able to aspartylate not only its cognate tRNA(Asp) but also tRNA(Asn). Reaction proceeds in two steps: L-aspartate is first activated by ATP to form Asp-AMP and then transferred to the acceptor end of tRNA(Asp/Asn). This is Aspartate--tRNA(Asp/Asn) ligase from Syntrophomonas wolfei subsp. wolfei (strain DSM 2245B / Goettingen).